Here is a 544-residue protein sequence, read N- to C-terminus: Chaperonin GroEL (544 aa).

ATP is bound by residues 30-33 (TLGP), Lys-51, 87-91 (DGTTT), Gly-415, and Asp-495.

It belongs to the chaperonin (HSP60) family. As to quaternary structure, forms a cylinder of 14 subunits composed of two heptameric rings stacked back-to-back. Interacts with the co-chaperonin GroES.

Its subcellular location is the cytoplasm. The enzyme catalyses ATP + H2O + a folded polypeptide = ADP + phosphate + an unfolded polypeptide.. Together with its co-chaperonin GroES, plays an essential role in assisting protein folding. The GroEL-GroES system forms a nano-cage that allows encapsulation of the non-native substrate proteins and provides a physical environment optimized to promote and accelerate protein folding. This Neisseria flavescens protein is Chaperonin GroEL.